The chain runs to 90 residues: Heat shock protein beta-7 (90 aa).

In terms of domain architecture, sHSP spans 39-90 (PLTFPARPGGQGNIKTLGDAYEFTVDMRDFSPEDIIVTTSNNHIEVRAEKKP).

It belongs to the small heat shock protein (HSP20) family. Interacts with C-terminal domain of actin-binding protein 280. As to expression, found in both cardiac and skeletal muscle.

The protein localises to the cytoplasm. The protein resides in the nucleus. Its subcellular location is the cajal body. In Rattus norvegicus (Rat), this protein is Heat shock protein beta-7 (Hspb7).